Reading from the N-terminus, the 164-residue chain is HTH-type transcriptional regulator PapX (164 aa).

The HTH marR-type domain occupies 25 to 159 (EHLLMQLCIR…FEVISKKLLA (135 aa)).

The protein resides in the cytoplasm. The chain is HTH-type transcriptional regulator PapX (papX) from Escherichia coli.